We begin with the raw amino-acid sequence, 321 residues long: MVIIKPMIVQVHQSGYRLDYILSKLLPQYSRSQIKHWILNKKVVVNNQVSTLPRKKVVYGELIEIKYINNNDICKSEDIVPQNIPLNIIYEDNDILVINKASNMVVHPGIGHYQGTVLNALLYRYPSILKISKQAGIVQRLDKDTTGLMIIAKTVSAYDNLLRSFKLRKVVKEYDAIVYGKFTSNAGVVNQPMRRHFAKRTFMSVHYTGKSAVTYYSVVEEFKAHSRVRINLKTGRTHQIRVHMAYINHPLVGDQKYKGNFSVFDIKKMSDELNNYLLDFNRQALHACTLQLLHPITQVQMKWNAPLPQDILQLIAILKKY.

The S4 RNA-binding domain maps to 16-93; that stretch reads YRLDYILSKL…IPLNIIYEDN (78 aa). D142 is an active-site residue.

Belongs to the pseudouridine synthase RluA family.

It is found in the cytoplasm. The enzyme catalyses uridine(1911/1915/1917) in 23S rRNA = pseudouridine(1911/1915/1917) in 23S rRNA. Its function is as follows. Responsible for synthesis of pseudouridine from uracil at positions 1911, 1915 and 1917 in 23S ribosomal RNA. The protein is Ribosomal large subunit pseudouridine synthase D (rluD) of Blochmanniella floridana.